Here is a 228-residue protein sequence, read N- to C-terminus: PKHD-type hydroxylase XAC2942 (228 aa).

The region spanning 78-180 (RIYPPLFNRY…RVACFFWAQS (103 aa)) is the Fe2OG dioxygenase domain. The Fe cation site is built by His-96, Asp-98, and His-161. Residue Arg-171 participates in 2-oxoglutarate binding.

Requires Fe(2+) as cofactor. L-ascorbate serves as cofactor.

This chain is PKHD-type hydroxylase XAC2942, found in Xanthomonas axonopodis pv. citri (strain 306).